Consider the following 464-residue polypeptide: Citrate synthase, mitochondrial (464 aa).

The transit peptide at 1-27 directs the protein to the mitochondrion; sequence MALLTAAARLFGAKNASCLVLAARHAS. The short motif at 2-21 is the SIFI-degron element; the sequence is ALLTAAARLFGAKNASCLVL. Lys-76 is modified (N6-acetyllysine; alternate). Position 76 is an N6-succinyllysine; alternate (Lys-76). An N6-succinyllysine mark is found at Lys-103 and Lys-193. Ser-226 bears the Phosphoserine mark. His-301 is a catalytic residue. Residues Lys-321 and Lys-327 each carry the N6-acetyllysine; alternate modification. N6-succinyllysine; alternate is present on residues Lys-321 and Lys-327. The active site involves His-347. Arg-356 contacts oxaloacetate. The residue at position 375 (Lys-375) is an N6-acetyllysine; alternate. N6-succinyllysine; alternate is present on Lys-375. Residue Lys-382 is modified to N6-acetyllysine. Lys-393 bears the N6-acetyllysine; alternate mark. Residue Lys-393 is modified to N6-succinyllysine; alternate. Lys-395 is modified (N6,N6,N6-trimethyllysine). Asp-402 is an active-site residue. Arg-428 and Arg-448 together coordinate oxaloacetate. Lys-450 is subject to N6-succinyllysine. N6-acetyllysine; alternate is present on Lys-459. Lys-459 bears the N6-succinyllysine; alternate mark.

Belongs to the citrate synthase family. Homodimer. Methylated. Trimethylation at Lys-395 by CSKMT decreases citrate synthase activity. In terms of processing, in response to mitochondrial stress, the precursor protein is ubiquitinated by the SIFI complex in the cytoplasm before mitochondrial import, leading to its degradation. Within the SIFI complex, UBR4 initiates ubiquitin chain that are further elongated or branched by KCMF1.

It is found in the mitochondrion matrix. The enzyme catalyses oxaloacetate + acetyl-CoA + H2O = citrate + CoA + H(+). It participates in carbohydrate metabolism; tricarboxylic acid cycle; isocitrate from oxaloacetate: step 1/2. In terms of biological role, key enzyme of the Krebs tricarboxylic acid cycle which catalyzes the synthesis of citrate from acetyl coenzyme A and oxaloacetate. The protein is Citrate synthase, mitochondrial (CS) of Sus scrofa (Pig).